Here is a 356-residue protein sequence, read N- to C-terminus: S-adenosylmethionine:tRNA ribosyltransferase-isomerase (356 aa).

Belongs to the QueA family. As to quaternary structure, monomer.

It is found in the cytoplasm. The catalysed reaction is 7-aminomethyl-7-carbaguanosine(34) in tRNA + S-adenosyl-L-methionine = epoxyqueuosine(34) in tRNA + adenine + L-methionine + 2 H(+). It participates in tRNA modification; tRNA-queuosine biosynthesis. In terms of biological role, transfers and isomerizes the ribose moiety from AdoMet to the 7-aminomethyl group of 7-deazaguanine (preQ1-tRNA) to give epoxyqueuosine (oQ-tRNA). This Escherichia coli O127:H6 (strain E2348/69 / EPEC) protein is S-adenosylmethionine:tRNA ribosyltransferase-isomerase.